The chain runs to 192 residues: 7-methyl-GTP pyrophosphatase (192 aa).

Asp-69 serves as the catalytic Proton acceptor.

Belongs to the Maf family. YceF subfamily. A divalent metal cation serves as cofactor.

Its subcellular location is the cytoplasm. It catalyses the reaction N(7)-methyl-GTP + H2O = N(7)-methyl-GMP + diphosphate + H(+). Functionally, nucleoside triphosphate pyrophosphatase that hydrolyzes 7-methyl-GTP (m(7)GTP). May have a dual role in cell division arrest and in preventing the incorporation of modified nucleotides into cellular nucleic acids. In Pseudomonas fluorescens (strain Pf0-1), this protein is 7-methyl-GTP pyrophosphatase.